The chain runs to 243 residues: GTP cyclohydrolase 1 (243 aa).

Thr15 is modified (phosphothreonine). The interval Asn18–Lys55 is disordered. Residue Ser23 is modified to Phosphoserine. The Zn(2+) site is built by Cys132, His135, and Cys203.

This sequence belongs to the GTP cyclohydrolase I family. Homodimer.

It catalyses the reaction GTP + H2O = 7,8-dihydroneopterin 3'-triphosphate + formate + H(+). It participates in cofactor biosynthesis; 7,8-dihydroneopterin triphosphate biosynthesis; 7,8-dihydroneopterin triphosphate from GTP: step 1/1. Its function is as follows. GTP cyclohydrolase 1 is the first enzyme in the biosynthetic pathway leading to folic acid. The polypeptide is GTP cyclohydrolase 1 (Saccharomyces cerevisiae (strain ATCC 204508 / S288c) (Baker's yeast)).